The following is a 181-amino-acid chain: Photosystem I assembly protein Ycf4 (181 aa).

2 consecutive transmembrane segments (helical) span residues 19 to 41 and 61 to 83; these read YFWAVFLCSGGISFLLAGISSYF and LVMSFYGTLSIALAIYILGTLFW.

It belongs to the Ycf4 family.

It is found in the plastid. The protein localises to the chloroplast thylakoid membrane. In terms of biological role, seems to be required for the assembly of the photosystem I complex. This is Photosystem I assembly protein Ycf4 from Trieres chinensis (Marine centric diatom).